A 213-amino-acid polypeptide reads, in one-letter code: Adenylate kinase (213 aa).

Residue 10-15 (GSGKGT) participates in ATP binding. The NMP stretch occupies residues 30-59 (SVGDLLRNIISSESKLGKGIKDTVESGNLI). AMP-binding positions include Arg-36, 57-59 (NLI), 83-86 (GFPR), and Gln-90. The segment at 125–160 (DRLTCLDCKSIYSISSFKNTTCAKCKSTRLEKRIDD) is LID. Arg-126 lines the ATP pocket. Zn(2+) is bound by residues Cys-129 and Cys-132. An ATP-binding site is contributed by 135–136 (IY). The Zn(2+) site is built by Cys-146 and Cys-149. AMP-binding residues include Arg-157 and Arg-169. Leu-195 serves as a coordination point for ATP.

This sequence belongs to the adenylate kinase family. As to quaternary structure, monomer.

It localises to the cytoplasm. It catalyses the reaction AMP + ATP = 2 ADP. The protein operates within purine metabolism; AMP biosynthesis via salvage pathway; AMP from ADP: step 1/1. Functionally, catalyzes the reversible transfer of the terminal phosphate group between ATP and AMP. Plays an important role in cellular energy homeostasis and in adenine nucleotide metabolism. The chain is Adenylate kinase from Wolbachia pipientis subsp. Culex pipiens (strain wPip).